A 264-amino-acid polypeptide reads, in one-letter code: MSKDRMVELLQEHFELNLYEARAYVALVAFGVLTPAELASVSEVPAPRTYDVLRSLEKKGFAMTQPGKTNKYRPVHPANVLEKFIQDWQERVKEELEAKKKAKEELLELMAPLIETEVPKYGVERVWVVRGIKNSTLKTKEMLEEAQNEILLADDGFIAVNLEDDIIKAVDRGVKTKILLTKNLLPRLKASKIIDYAKEGKLELRALDKFDLPMLICDEEVFFALEDLAARYFNYETQVWIKDHRVVALFKEKFNEYWEKAEKV.

Positions 33–54 form a DNA-binding region, H-T-H motif; the sequence is LTPAELASVSEVPAPRTYDVLR.

The protein belongs to the transcriptional regulator TrmB family.

In terms of biological role, binds to the maltodextrin transport gene cluster (mdxE operon) promoter and to some other TGM (Thermococcales-Glycolytic-Motif) sequences, but not exclusively. The chain is Putative HTH-type transcriptional regulator TrmBL2 (trmBL2) from Pyrococcus furiosus (strain ATCC 43587 / DSM 3638 / JCM 8422 / Vc1).